We begin with the raw amino-acid sequence, 178 residues long: GTP-dependent dephospho-CoA kinase (178 aa).

Residues aspartate 43, isoleucine 44, valine 45, aspartate 62, lysine 64, and glutamate 120 each contribute to the GTP site.

This sequence belongs to the GTP-dependent DPCK family.

The catalysed reaction is 3'-dephospho-CoA + GTP = GDP + CoA + H(+). Its pathway is cofactor biosynthesis; coenzyme A biosynthesis. Catalyzes the GTP-dependent phosphorylation of the 3'-hydroxyl group of dephosphocoenzyme A to form coenzyme A (CoA). In Natronomonas pharaonis (strain ATCC 35678 / DSM 2160 / CIP 103997 / JCM 8858 / NBRC 14720 / NCIMB 2260 / Gabara) (Halobacterium pharaonis), this protein is GTP-dependent dephospho-CoA kinase.